Here is a 69-residue protein sequence, read N- to C-terminus: UPF0346 protein YuiB (69 aa).

Belongs to the UPF0346 family.

This chain is UPF0346 protein YuiB (yuiB), found in Lactococcus lactis subsp. lactis (strain IL1403) (Streptococcus lactis).